A 190-amino-acid chain; its full sequence is Holliday junction branch migration complex subunit RuvA (190 aa).

The interval 1–64 (MIGRITGTLI…EDAHLLYGFG (64 aa)) is domain I. The interval 65–137 (TASERAAFRE…MRGKLGADIG (73 aa)) is domain II. The flexible linker stretch occupies residues 137–141 (GATPH). The tract at residues 142-190 (AVPDSQSDILNALLALGYSEKESLAALKTLPEGLGVSDGIRQALKALAR) is domain III.

The protein belongs to the RuvA family. As to quaternary structure, homotetramer. Forms an RuvA(8)-RuvB(12)-Holliday junction (HJ) complex. HJ DNA is sandwiched between 2 RuvA tetramers; dsDNA enters through RuvA and exits via RuvB. An RuvB hexamer assembles on each DNA strand where it exits the tetramer. Each RuvB hexamer is contacted by two RuvA subunits (via domain III) on 2 adjacent RuvB subunits; this complex drives branch migration. In the full resolvosome a probable DNA-RuvA(4)-RuvB(12)-RuvC(2) complex forms which resolves the HJ.

Its subcellular location is the cytoplasm. Functionally, the RuvA-RuvB-RuvC complex processes Holliday junction (HJ) DNA during genetic recombination and DNA repair, while the RuvA-RuvB complex plays an important role in the rescue of blocked DNA replication forks via replication fork reversal (RFR). RuvA specifically binds to HJ cruciform DNA, conferring on it an open structure. The RuvB hexamer acts as an ATP-dependent pump, pulling dsDNA into and through the RuvAB complex. HJ branch migration allows RuvC to scan DNA until it finds its consensus sequence, where it cleaves and resolves the cruciform DNA. The sequence is that of Holliday junction branch migration complex subunit RuvA from Bordetella avium (strain 197N).